Here is a 280-residue protein sequence, read N- to C-terminus: 2-dehydro-3-deoxyphosphooctonate aldolase (280 aa).

The protein belongs to the KdsA family.

It is found in the cytoplasm. The catalysed reaction is D-arabinose 5-phosphate + phosphoenolpyruvate + H2O = 3-deoxy-alpha-D-manno-2-octulosonate-8-phosphate + phosphate. It functions in the pathway carbohydrate biosynthesis; 3-deoxy-D-manno-octulosonate biosynthesis; 3-deoxy-D-manno-octulosonate from D-ribulose 5-phosphate: step 2/3. It participates in bacterial outer membrane biogenesis; lipopolysaccharide biosynthesis. The chain is 2-dehydro-3-deoxyphosphooctonate aldolase from Neisseria meningitidis serogroup A / serotype 4A (strain DSM 15465 / Z2491).